The chain runs to 449 residues: MEKMEEKKRIVLVPVPAQRHVTPMMQLGTALNMKGFSITVVEGQFNKVSSSQNFPGFQFVTIPDTESLPESVLERLGPVEFLFEINKTSEASFKDCIRQSLLQQGNDIACIIYDEYMYFCGAAAKEFNLPSVIFSTQSATNQVSRCVLRKLSAEKFLVDMEDPEVQETLVENLHPLRYKDLPTSGVGPLDRLFELCREIVNKRTASAVIINTVRCLESSSLKRLQHELGIPVYALGPLHITVSAASSLLEEDRSCVEWLNKQKPRSVVYISLGSVVQMETKEVLEMARGLFNSNQPFLWVIRPGSIAGSEWIESLPEEVIKMVSERGYIVKWAPQIEVLGHPAVGGFWSHCGWNSTLESIVEGVPMICRPFHGEQKLNALCLESIWRIGFQVQGKVERGGVERAVKRLIVDEEGADMRERALVLKENLKASVRNGGSSYNALEEIVNLM.

UDP-alpha-D-glucose contacts are provided by residues serine 274, 333-335, 350-358, and 372-375; these read APQ, HCGWNSTLE, and HGEQ.

It belongs to the UDP-glycosyltransferase family.

The polypeptide is UDP-glycosyltransferase 76E6 (UGT76E6) (Arabidopsis thaliana (Mouse-ear cress)).